Consider the following 98-residue polypeptide: Protein S100-A11 (98 aa).

A Phosphothreonine modification is found at Thr5. 2 EF-hand domains span residues 8–44 (CIESLIAVFQKYSGKDGNNTQLSKTEFLSFMNTELAA) and 50–85 (KDPGVLDRMMKKLDLNCDGQLDFQEFLNLIGGLAIA). An N6-acetyllysine modification is found at Lys22. 8 residues coordinate Ca(2+): Asn26, Gln28, Glu33, Asp63, Asn65, Asp67, Gln69, and Glu74.

Belongs to the S-100 family. In terms of assembly, homodimer; disulfide-linked. Post-translationally, phosphorylation at Thr-5 significantly suppresses homodimerization and promotes association with NCL/nucleolin which induces nuclear translocation.

The protein localises to the cytoplasm. It is found in the nucleus. Facilitates the differentiation and the cornification of keratinocytes. This chain is Protein S100-A11 (S100a11), found in Mus musculus (Mouse).